A 179-amino-acid polypeptide reads, in one-letter code: Ribosome maturation factor RimM (179 aa).

The PRC barrel domain occupies 96 to 179 (DNEFYWVDLI…KITVDWGLDY (84 aa)).

The protein belongs to the RimM family. In terms of assembly, binds ribosomal protein uS19.

The protein localises to the cytoplasm. In terms of biological role, an accessory protein needed during the final step in the assembly of 30S ribosomal subunit, possibly for assembly of the head region. Essential for efficient processing of 16S rRNA. May be needed both before and after RbfA during the maturation of 16S rRNA. It has affinity for free ribosomal 30S subunits but not for 70S ribosomes. The protein is Ribosome maturation factor RimM of Janthinobacterium sp. (strain Marseille) (Minibacterium massiliensis).